Reading from the N-terminus, the 1069-residue chain is Calcium-transporting ATPase 10, plasma membrane-type (1069 aa).

Residues 1 to 29 (MSGQFNNSPRGEDKDVEAGTSSFTEYEDS) are disordered. S2 is subject to N-acetylserine. The Cytoplasmic portion of the chain corresponds to 2–180 (SGQFNNSPRG…NTYPQKKGRS (179 aa)). The tract at residues 42-53 (ERLRRWRQAALV) is interaction with calmodulin. A helical transmembrane segment spans residues 181 to 201 (FWRFVWEASQDLTLIILIVAA). Residues 202-219 (VASLALGIKTEGIEKGWY) are Lumenal-facing. The chain crosses the membrane as a helical span at residues 220 to 240 (DGISIAFAVLLVIVVTATSDY). At 241–369 (RQSLQFQNLN…GGETPLQVRL (129 aa)) the chain is on the cytoplasmic side. A helical transmembrane segment spans residues 370–389 (NGVATFIGIVGLTVAGVVLF). The Lumenal portion of the chain corresponds to 390-426 (VLVVRYFTGHTKNEQGGPQFIGGKTKFEHVLDDLVEI). Residues 427–444 (FTVAVTIVVVAVPEGLPL) traverse the membrane as a helical segment. The Cytoplasmic portion of the chain corresponds to 445–844 (AVTLTLAYSM…RWGRSVYANI (400 aa)). Residue D482 is the 4-aspartylphosphate intermediate of the active site. D789 and D793 together coordinate Mg(2+). The chain crosses the membrane as a helical span at residues 845–863 (QKFIQFQLTVNVAALVINV). Residues 864 to 874 (VAAISAGEVPL) lie on the Lumenal side of the membrane. The chain crosses the membrane as a helical span at residues 875-895 (TAVQLLWVNLIMDTLGALALA). At 896 to 915 (TEPPTDHLMDRAPVGRREPL) the chain is on the cytoplasmic side. The helical transmembrane segment at 916 to 938 (ITNIMWRNLFIQAMYQVTVLLIL) threads the bilayer. Topologically, residues 939 to 951 (NFRGISILHLKSK) are lumenal. Residues 952 to 973 (PNAERVKNTVIFNAFVICQVFN) form a helical membrane-spanning segment. Residues 974–991 (EFNARKPDEINIFRGVLR) lie on the Cytoplasmic side of the membrane. Residues 992 to 1013 (NHLFVGIISITIVLQVVIVEFL) form a helical membrane-spanning segment. Topologically, residues 1014-1023 (GTFASTTKLD) are lumenal. The chain crosses the membrane as a helical span at residues 1024–1045 (WEMWLVCIGIGSISWPLAVIGK). Residues 1046–1069 (LIPVPETPVSQYFRINRWRRNSSG) are Cytoplasmic-facing.

This sequence belongs to the cation transport ATPase (P-type) (TC 3.A.3) family. Type IIB subfamily.

The protein localises to the membrane. It carries out the reaction Ca(2+)(in) + ATP + H2O = Ca(2+)(out) + ADP + phosphate + H(+). Its activity is regulated as follows. Activated by calmodulin. Functionally, this magnesium-dependent enzyme catalyzes the hydrolysis of ATP coupled with the translocation of calcium from the cytosol into the endoplasmic reticulum. The protein is Calcium-transporting ATPase 10, plasma membrane-type (ACA10) of Arabidopsis thaliana (Mouse-ear cress).